Reading from the N-terminus, the 76-residue chain is MAFLKKSLFLVLFLGLVSLSICEEEKRENKDEIEQEDDEQSEEKRALWKDILKNVGKAAGKAVLNTVTDMVNQGEQ.

Residues 1 to 22 (MAFLKKSLFLVLFLGLVSLSIC) form the signal peptide. The propeptide occupies 23 to 43 (EEEKRENKDEIEQEDDEQSEE). Glutamine 73 is modified (glutamine amide). Residues 75 to 76 (EQ) constitute a propeptide that is removed on maturation.

This sequence belongs to the frog skin active peptide (FSAP) family. Dermaseptin subfamily. Expressed by the skin glands.

It localises to the secreted. In terms of biological role, potent antimicrobial peptide with potent activity against Gram-positive and Gram-negative bacteria. Probably acts by disturbing membrane functions with its amphipathic structure. Has an activity of stimulation of insulin release, which may protect the species from being eaten by predators by causing fatal hypoglycemia. Has hemolytic activity. The sequence is that of Dermaseptin-B4 from Phyllomedusa bicolor (Two-colored leaf frog).